The chain runs to 204 residues: High mobility group-T protein (204 aa).

2 DNA-binding regions (HMG box) span residues 8–78 (PRGK…RSYI) and 94–162 (PKRP…TAYR). Residues 162 to 204 (RNKGKVPVSMPAKAAAPAKDDDDDDDDDDDDEDDDDDDDEDDE) form a disordered region. Acidic residues predominate over residues 181–204 (DDDDDDDDDDDDEDDDDDDDEDDE).

It belongs to the HMGB family.

It is found in the nucleus. Its subcellular location is the chromosome. Its function is as follows. Binds preferentially single-stranded DNA and unwinds double-stranded DNA. This Oncorhynchus mykiss (Rainbow trout) protein is High mobility group-T protein.